Consider the following 216-residue polypeptide: Orotate phosphoribosyltransferase (216 aa).

Lys30 contributes to the 5-phospho-alpha-D-ribose 1-diphosphate binding site. 38–39 (FF) contributes to the orotate binding site. 5-phospho-alpha-D-ribose 1-diphosphate-binding positions include 75–76 (YK), Arg102, Lys103, Lys106, His108, and 128–136 (DDVITAGTA). Residues Thr132 and Arg160 each contribute to the orotate site.

Belongs to the purine/pyrimidine phosphoribosyltransferase family. PyrE subfamily. In terms of assembly, homodimer. Mg(2+) serves as cofactor.

The enzyme catalyses orotidine 5'-phosphate + diphosphate = orotate + 5-phospho-alpha-D-ribose 1-diphosphate. Its pathway is pyrimidine metabolism; UMP biosynthesis via de novo pathway; UMP from orotate: step 1/2. In terms of biological role, catalyzes the transfer of a ribosyl phosphate group from 5-phosphoribose 1-diphosphate to orotate, leading to the formation of orotidine monophosphate (OMP). This Acinetobacter baumannii (strain ATCC 17978 / DSM 105126 / CIP 53.77 / LMG 1025 / NCDC KC755 / 5377) protein is Orotate phosphoribosyltransferase.